The chain runs to 138 residues: High mobility group B protein 4 (138 aa).

2 disordered regions span residues 1–41 (MKGG…PPSA) and 105–138 (LKLA…EDDD). A compositionally biased stretch (basic residues) spans 18–29 (KTRGRKAGKKTK). The HMG box DNA-binding region spans 35-104 (PKRPPSAFFV…EYIKNVQQYN (70 aa)). A phosphoserine mark is found at serine 123 and serine 130. A compositionally biased stretch (acidic residues) spans 126 to 138 (DEAVSEEEAEDDD).

This sequence belongs to the HMGB family. As to expression, mostly expressed roots and flowers, and, to a lower extent, in stems and leaves.

It localises to the nucleus. The protein resides in the cytoplasm. It is found in the cytosol. Functionally, binds preferentially double-stranded DNA. The polypeptide is High mobility group B protein 4 (HMGB4) (Arabidopsis thaliana (Mouse-ear cress)).